Here is a 463-residue protein sequence, read N- to C-terminus: MISAISSPWLTQLSHFCDVAAFTANSLSSLNASGGYHLSPSPGDPYSQHEPHYEPCSASQHSYSFGHACPEPESGASSSSCASSTPGSGSTGSSSGNKAPVKKNPKVANITVQLEMKALWDEFNQLGTEMIVTKAGRRMFPTFQVKIFGMDPMADYMLLMDFVPVDDKRYRYAFHSSSWLVAGKADPATPGRVHYHPDSPAKGAQWMKQIVSFDKLKLTNNLLDDNGHIILNSMHRYQPRFHVVYVDPRKDSEKYAEENFKTFVFEETRFTAVTAYQNHRITQLKIASNPFAKGFRDCDPEDWPRNHRPGSLPLMNAFARSRNPVSSPPQNGSDKDGDGRREYERDASVTPLHGDAAHQQLMSRVLSPSLPVPGGLVPLSTGRPSPPHELRLDPHSQGSEPLHHHPYKYPTSYDHYLGAKTRPAPYPLPSIRGHGYHHHPMNPAAANMYSGAGAPGGYEYGPR.

2 disordered regions span residues 39–58 (SPSP…PCSA) and 75–102 (GASS…APVK). Residues 75-96 (GASSSSCASSTPGSGSTGSSSG) show a composition bias toward low complexity. The T-box DNA-binding region spans 119–297 (LWDEFNQLGT…SNPFAKGFRD (179 aa)). 2 disordered regions span residues 320–343 (RSRN…RREY) and 367–406 (SPSL…HHHP). Over residues 323-332 (NPVSSPPQNG) the composition is skewed to polar residues. Over residues 333 to 343 (SDKDGDGRREY) the composition is skewed to basic and acidic residues. The span at 367 to 380 (SPSLPVPGGLVPLS) shows a compositional bias: low complexity. Residues 420-431 (KTRPAPYPLPSI) carry the Nuclear localization signal motif.

Binds DNA as a dimer. Interacts with dscr6/ripply3.

The protein localises to the nucleus. Its function is as follows. Probable transcriptional regulator involved in developmental processes. Binds to the palindromic T site 5'-TTCACACCTAGGTGTGAA-3' DNA sequence. Induces pre-placodal ectoderm (PPE) gene expression in regions where RIPPLY3 is absent. Plays a role in the formation of the anteroposterior (AP) axis during embryonic development; required to establish the posterolateral border of the pre-placodal ectoderm (PPE) acting downstream of the retinoic acid receptor (RAR) signaling. Functionally, probable transcriptional regulator involved in developmental processes. Binds to the palindromic T site 5'-TTCACACCTAGGTGTGAA-3' DNA sequence. Is required for normal development of the pharyngeal arch arteries. In Xenopus laevis (African clawed frog), this protein is T-box transcription factor TBX1-B (tbx1-b).